The primary structure comprises 362 residues: MEWRSLPVELQEEILSRVPAKYLARLRSTSKQWNALSKTGSFAKKHSANATKEPLIIMLKDSRVYLASVNLHGVHNNVAQSFELGSRLYLKDPHISNVFHCDGLLLLCSIKENTLEVWNPCSGEAKLIKPRHSYYKESDFYALGYDNKSSCKKYKVLRVISQVHVQGDFKIEYEIYDFTNDSWRVHGATTELSIRQKHPVSVKGSTYWVVRNRYFPYKYFLSFDFSTERFQSLSLPQPFPYLVTDLSVVREEQLCLFGYYNWSTTSEDLNVWVTTSLGSVVSWSKFLTIQIIKPRVDMFDYGMSFLVDEQNKSLVCWISQKVLHIVGEIYHIQDLDDHGRDSALRSSCSVLMNYVPSLAQIQ.

Positions 1 to 46 constitute an F-box domain; the sequence is MEWRSLPVELQEEILSRVPAKYLARLRSTSKQWNALSKTGSFAKKH.

This is Putative F-box protein At3g23260 from Arabidopsis thaliana (Mouse-ear cress).